Consider the following 715-residue polypeptide: Palmitoyltransferase ZDHHC5 (715 aa).

Over 1-13 (MPAESGKRFKPSK) the chain is Cytoplasmic. The chain crosses the membrane as a helical span at residues 14 to 34 (YVPVSAAAIFLVGATTLFFAF). Residues 35–52 (TCPGLSLDVSPAVPIYNA) lie on the Extracellular side of the membrane. A helical transmembrane segment spans residues 53–73 (IMFLFVLANFSMATFMDPGIF). The Cytoplasmic segment spans residues 74-148 (PRAEEDEDKE…NCIGRRNYRY (75 aa)). A Phosphotyrosine modification is found at Tyr91. The DHHC domain maps to 104-154 (KWCATCRFYRPPRCSHCSVCDNCVEEFDHHCPWVNNCIGRRNYRYFFLFLL). The active-site S-palmitoyl cysteine intermediate is the Cys134. Residues 149–169 (FFLFLLSLTAHIMGVFGFGLL) form a helical membrane-spanning segment. Residues 170 to 191 (YVLCHIEELSGVRTAVTMAVMC) lie on the Extracellular side of the membrane. The chain crosses the membrane as a helical span at residues 192 to 212 (VAGLFFIPVAGLTGFHVVLVA). The Cytoplasmic segment spans residues 213–715 (RGRTTNEQVT…VGGTTYEISV (503 aa)). Residue Ser247 is modified to Phosphoserine. Positions 289-715 (GELRRTKSKG…VGGTTYEISV (427 aa)) are disordered. Thr294 bears the Phosphothreonine mark. 2 positions are modified to phosphoserine: Ser296 and Ser299. Residue Thr303 is modified to Phosphothreonine. At Ser345 the chain carries Phosphoserine. 2 positions are modified to phosphothreonine: Thr348 and Thr350. The span at 359 to 373 (SSSSTSAAMPHSSSA) shows a compositional bias: low complexity. Phosphoserine is present on residues Ser380, Ser398, Ser406, and Ser409. The residue at position 411 (Thr411) is a Phosphothreonine. 4 positions are modified to phosphoserine: Ser415, Ser425, Ser429, and Ser432. Over residues 422–432 (SSGSRSSSLKS) the composition is skewed to low complexity. The residue at position 436 (Thr436) is a Phosphothreonine. A compositionally biased stretch (polar residues) spans 442-478 (QLQSIRSEGTTSTSYKSLANQTRNGSLSYDSLLTPSD). Phosphoserine occurs at positions 529 and 554. A compositionally biased stretch (low complexity) spans 581-597 (PRTSSSSDDSKRSPLSK). The residue at position 617 (Arg617) is an Omega-N-methylarginine. Ser621 bears the Phosphoserine mark. Thr659 bears the Phosphothreonine mark. The span at 666-677 (LKTTYSKSNGQP) shows a compositional bias: polar residues. 2 positions are modified to phosphoserine: Ser684 and Ser694. At Arg697 the chain carries Omega-N-methylarginine.

The protein belongs to the DHHC palmitoyltransferase family. ERF2/ZDHHC9 subfamily. In terms of processing, autopalmitoylated. Palmitoylation of the C-terminal tail regulates stimulation-dependent plasma membrane motility. Post-translationally, phosphorylation regulates association with endocytic proteins and its subcellular localization. Phosphorylation by LYN during fatty acid uptake leads to inactivation of the activity.

The protein localises to the cell membrane. It carries out the reaction L-cysteinyl-[protein] + hexadecanoyl-CoA = S-hexadecanoyl-L-cysteinyl-[protein] + CoA. Its function is as follows. Palmitoyltransferase that catalyzes the addition of palmitate onto various protein substrates such as CTNND2, CD36, GSDMD, NLRP3, NOD1, NOD2, STAT3 and S1PR1 thus plays a role in various biological processes including cell adhesion, inflammation, fatty acid uptake, bacterial sensing or cardiac functions. Plays an important role in the regulation of synapse efficacy by mediating palmitoylation of delta-catenin/CTNND2, thereby increasing synaptic delivery and surface stabilization of alpha-amino-3-hydroxy-5-methyl-4-isoxazole propionic acid receptors (AMPARs). Under basal conditions, remains at the synaptic membrane through FYN-mediated phosphorylation that prevents association with endocytic proteins. Neuronal activity enhances the internalization and trafficking of DHHC5 from spines to dendritic shafts where it palmitoylates delta-catenin/CTNND2. Regulates cell adhesion at the plasma membrane by palmitoylating GOLGA7B and DSG2. Plays a role in innate immune response by mediating the palmitoylation of NOD1 and NOD2 and their proper recruitment to the bacterial entry site and phagosomes. Also participates in fatty acid uptake by palmitoylating CD36 and thereby targeting it to the plasma membrane. Upon binding of fatty acids to CD36, gets phosphorylated by LYN leading to inactivation and subsequent CD36 caveolar endocytosis. Controls oligodendrocyte development by catalyzing STAT3 palmitoylation. Acts as a regulator of inflammatory response by mediating palmitoylation of NLRP3 and GSDMD. Palmitoylates NLRP3 to promote inflammasome assembly and activation. Activates pyroptosis by catalyzing palmitoylation of gasdermin-D (GSDMD), thereby promoting membrane translocation and pore formation of GSDMD. This Rattus norvegicus (Rat) protein is Palmitoyltransferase ZDHHC5 (Zdhhc5).